Consider the following 381-residue polypeptide: Cytochrome b (381 aa).

4 helical membrane passes run 33–53, 77–98, 113–133, and 178–198; these read FGSLLGICLIIQILTGLFLAM, WLLRNLHANGASMFFMCLFLHV, WNIGVILLLTVMATAFVGYVL, and FFAFHFILPFIIVAFAAVHLL. Residues H83 and H97 each coordinate heme b. The heme b site is built by H182 and H196. Residue H201 coordinates a ubiquinone. 4 helical membrane-spanning segments follow: residues 226–246, 288–308, 320–340, and 347–367; these read IKDALGLIFLILSLLLLGLFS, LGGVLALLASILILLIIPLLH, IFQTLFWILTADLITLTWIGG, and FIIIGQLALMLYFLLILALMP.

Belongs to the cytochrome b family. The cytochrome bc1 complex contains 11 subunits: 3 respiratory subunits (MT-CYB, CYC1 and UQCRFS1), 2 core proteins (UQCRC1 and UQCRC2) and 6 low-molecular weight proteins (UQCRH/QCR6, UQCRB/QCR7, UQCRQ/QCR8, UQCR10/QCR9, UQCR11/QCR10 and a cleavage product of UQCRFS1). This cytochrome bc1 complex then forms a dimer. It depends on heme b as a cofactor.

It localises to the mitochondrion inner membrane. Its function is as follows. Component of the ubiquinol-cytochrome c reductase complex (complex III or cytochrome b-c1 complex) that is part of the mitochondrial respiratory chain. The b-c1 complex mediates electron transfer from ubiquinol to cytochrome c. Contributes to the generation of a proton gradient across the mitochondrial membrane that is then used for ATP synthesis. This is Cytochrome b (MT-CYB) from Dasykaluta rosamondae (Little red marsupial mouse).